A 115-amino-acid chain; its full sequence is Large ribosomal subunit protein bL19 (115 aa).

This sequence belongs to the bacterial ribosomal protein bL19 family.

This protein is located at the 30S-50S ribosomal subunit interface and may play a role in the structure and function of the aminoacyl-tRNA binding site. The protein is Large ribosomal subunit protein bL19 of Nitratidesulfovibrio vulgaris (strain DSM 19637 / Miyazaki F) (Desulfovibrio vulgaris).